We begin with the raw amino-acid sequence, 417 residues long: MQDNVSQRKWNVESSKSANNAFNPIRRIVDKGGFKPNPNKSTISLSIGDPCVFGNLNILDYANDLLIENIKSSKFNGYPPSTGYEIAREAVAKYVETPTSKLTSKDIIVASGASGAIELAIGVLLNEGDNILVPKPGFPLYECTSKTKFINVKHYNLLEKQGFNVDLEHLRSLIDDKTKAILVNNPSNPCGIVYSKQHLLDIIQVAREYCLPIIADEIYSDLTFGEHKFYPMASLTDKVPILSIGGIAKRFLVPGWRLGWVAIHDRDNIFSNGRIIEGLISLSQVILGPNSLVQSILPKLLDPQNTQVKEWCSTITKTLESHSKLTVDMLSKANGLKPVCSSGTMYQMIEIDCSKYEDIADDNEFVGKLLEEQSVFLLQGTVFSLPNFFRIVFCAPIDKLTEAYERIIEFCETHKKK.

An N6-(pyridoxal phosphate)lysine modification is found at Lys-249.

The protein belongs to the class-I pyridoxal-phosphate-dependent aminotransferase family. In terms of assembly, homodimer. Pyridoxal 5'-phosphate is required as a cofactor.

It carries out the reaction L-tyrosine + 2-oxoglutarate = 3-(4-hydroxyphenyl)pyruvate + L-glutamate. Its pathway is amino-acid degradation; L-phenylalanine degradation; acetoacetate and fumarate from L-phenylalanine: step 2/6. Functionally, transaminase involved in tyrosine breakdown. Converts tyrosine to p-hydroxyphenylpyruvate. Has much lower affinity and transaminase activity towards phenylalanine. The polypeptide is Tyrosine aminotransferase (tat) (Dictyostelium discoideum (Social amoeba)).